We begin with the raw amino-acid sequence, 144 residues long: Large ribosomal subunit protein uL14 (144 aa).

It belongs to the universal ribosomal protein uL14 family. In terms of assembly, part of the 50S ribosomal subunit. Forms a cluster with proteins L3 and L24e, part of which may contact the 16S rRNA in 2 intersubunit bridges.

In terms of biological role, binds to 23S rRNA. Forms part of two intersubunit bridges in the 70S ribosome. The protein is Large ribosomal subunit protein uL14 of Pyrobaculum islandicum (strain DSM 4184 / JCM 9189 / GEO3).